The primary structure comprises 621 residues: Pentatricopeptide repeat-containing protein At1g12620 (621 aa).

PPR repeat units lie at residues Gly36–Pro70, Arg71–His105, Asn106–Pro140, Asp141–Pro175, Thr176–Pro210, Asn211–Leu245, Asp246–Ala280, Asp281–Pro315, Asp316–Pro350, Asp351–Pro385, Asn386–Ala420, Asp421–Pro455, Asp456–Leu490, Asp491–Pro525, Asp526–Pro560, and Asn561–Val595.

It belongs to the PPR family. P subfamily.

This is Pentatricopeptide repeat-containing protein At1g12620 from Arabidopsis thaliana (Mouse-ear cress).